A 60-amino-acid chain; its full sequence is Large ribosomal subunit protein bL32 (60 aa).

The span at 1 to 20 (MAVQKSRKSRSRRDMRRSHH) shows a compositional bias: basic residues. Residues 1 to 22 (MAVQKSRKSRSRRDMRRSHHRM) form a disordered region.

The protein belongs to the bacterial ribosomal protein bL32 family.

This chain is Large ribosomal subunit protein bL32, found in Psychrobacter arcticus (strain DSM 17307 / VKM B-2377 / 273-4).